Reading from the N-terminus, the 307-residue chain is HTH-type transcriptional regulator DmlR (307 aa).

Residues proline 5–threonine 62 enclose the HTH lysR-type domain. Positions phenylalanine 22 to alanine 41 form a DNA-binding region, H-T-H motif.

It belongs to the LysR transcriptional regulatory family.

In terms of biological role, transcriptional regulator required for the aerobic growth on D-malate as the sole carbon source. Induces the expression of dmlA in response to D-malate or L- or meso-tartrate. Negatively regulates its own expression. This is HTH-type transcriptional regulator DmlR (dmlR) from Escherichia coli (strain K12).